The sequence spans 117 residues: Putative iron-sulfur cluster insertion protein ErpA (117 aa).

The iron-sulfur cluster site is built by Cys-45, Cys-109, and Cys-111.

It belongs to the HesB/IscA family. Homodimer. Requires iron-sulfur cluster as cofactor.

Required for insertion of 4Fe-4S clusters. This chain is Putative iron-sulfur cluster insertion protein ErpA, found in Methylobacillus flagellatus (strain ATCC 51484 / DSM 6875 / VKM B-1610 / KT).